The chain runs to 117 residues: DNA-directed RNA polymerase subunit omega (117 aa).

Belongs to the RNA polymerase subunit omega family. The RNAP catalytic core consists of 2 alpha, 1 beta, 1 beta' and 1 omega subunit. When a sigma factor is associated with the core the holoenzyme is formed, which can initiate transcription.

It catalyses the reaction RNA(n) + a ribonucleoside 5'-triphosphate = RNA(n+1) + diphosphate. In terms of biological role, promotes RNA polymerase assembly. Latches the N- and C-terminal regions of the beta' subunit thereby facilitating its interaction with the beta and alpha subunits. The chain is DNA-directed RNA polymerase subunit omega from Cereibacter sphaeroides (strain ATCC 17025 / ATH 2.4.3) (Rhodobacter sphaeroides).